The chain runs to 398 residues: MAAGAGARPAPRWVKALGEPLSAAQLRRLEDHRYSAAGESLFEPPLQLFWTWLLQWIPLWIAPNTITLFGLAINLFTTLVLIFYCPTVTEEAPYWTYLLCALGLFIYQSLDAIDGKQARRTNSCSPLGELFDHGCDSLSTVFMAIGASIAVRLGTHPDWLFFCSFVGMFMFYCAHWQTYVSGVLRFGRVDVTEIQVALVIVFLLSTFGGAMMWDYTIPILEIKLKILPVLGVVGGLIFSCSNYFHVILHGGVGKNGSTIAGTSVLSPGLHIGLIIILAIMIYKKSATNVFEKHPCLYTLMFGCVFAKVAQKLVIAHMTKSELYLQDTVFIGPGLLFLDQYFNNFIDEYVVLWIAMVITSFDMMIYFSSLCLQISRHLHLSIFKTSYQQAPEQVHKHID.

A2 bears the N-acetylalanine mark. The Cytoplasmic portion of the chain corresponds to 2-62 (AAGAGARPAP…LLQWIPLWIA (61 aa)). A helical transmembrane segment spans residues 63 to 83 (PNTITLFGLAINLFTTLVLIF). N64 serves as a coordination point for CDP-choline. Over 84 to 93 (YCPTVTEEAP) the chain is Lumenal. Residues 94-118 (YWTYLLCALGLFIYQSLDAIDGKQA) traverse the membrane as a helical segment. Mg(2+) contacts are provided by D111 and D114. Position 119 (R119) interacts with CDP-choline. The Cytoplasmic segment spans residues 119–125 (RRTNSCS). The helical transmembrane segment at 126–150 (PLGELFDHGCDSLSTVFMAIGASIA) threads the bilayer. D132 contacts Mg(2+). The Proton acceptor role is filled by H133. D136 contacts Mg(2+). The Lumenal portion of the chain corresponds to 151–160 (VRLGTHPDWL). A helical transmembrane segment spans residues 161-179 (FFCSFVGMFMFYCAHWQTY). Residues 180–190 (VSGVLRFGRVD) lie on the Cytoplasmic side of the membrane. A helical transmembrane segment spans residues 191–207 (VTEIQVALVIVFLLSTF). Residues 208–222 (GGAMMWDYTIPILEI) are Lumenal-facing. Residues 223-248 (KLKILPVLGVVGGLIFSCSNYFHVIL) form a helical membrane-spanning segment. Topologically, residues 249–265 (HGGVGKNGSTIAGTSVL) are cytoplasmic. The helical transmembrane segment at 266 to 281 (SPGLHIGLIIILAIMI) threads the bilayer. The Lumenal segment spans residues 282 to 293 (YKKSATNVFEKH). Residues 294 to 316 (PCLYTLMFGCVFAKVAQKLVIAH) form a helical membrane-spanning segment. The Cytoplasmic segment spans residues 317-329 (MTKSELYLQDTVF). Residues 330-339 (IGPGLLFLDQ) traverse the membrane as a helical segment. Over 340-346 (YFNNFID) the chain is Lumenal. Residues 347 to 376 (EYVVLWIAMVITSFDMMIYFSSLCLQISRH) traverse the membrane as a helical segment. Over 377–398 (LHLSIFKTSYQQAPEQVHKHID) the chain is Cytoplasmic.

The protein belongs to the CDP-alcohol phosphatidyltransferase class-I family. Mg(2+) is required as a cofactor. It depends on Mn(2+) as a cofactor.

The protein resides in the golgi apparatus membrane. It catalyses the reaction CDP-choline + a 1,2-diacyl-sn-glycerol = a 1,2-diacyl-sn-glycero-3-phosphocholine + CMP + H(+). The catalysed reaction is 1-octadecanoyl-2-(5Z,8Z,11Z,14Z-eicosatetraenoyl)-sn-glycerol + CDP-choline = 1-octadecanoyl-2-(5Z,8Z,11Z,14Z-eicosatetraenoyl)-sn-glycero-3-phosphocholine + CMP + H(+). The enzyme catalyses 1-hexadecanoyl-2-(9Z-octadecenoyl)-sn-glycerol + CDP-choline = 1-hexadecanoyl-2-(9Z-octadecenoyl)-sn-glycero-3-phosphocholine + CMP + H(+). It carries out the reaction 1-hexadecanoyl-2-(4Z,7Z,10Z,13Z,16Z,19Z-docosahexaenoyl)-sn-glycerol + CDP-choline = 1-hexadecanoyl-2-(4Z,7Z,10Z,13Z,16Z,19Z-docosahexaenoyl)-sn-glycero-3-phosphocholine + CMP + H(+). It catalyses the reaction 1,2-dioctanoyl-sn-glycerol + CDP-choline = 1,2-dioctanoyl-sn-glycero-3-phosphocholine + CMP + H(+). The protein operates within phospholipid metabolism; phosphatidylcholine biosynthesis; phosphatidylcholine from phosphocholine: step 2/2. Catalyzes the final step of de novo phosphatidylcholine (PC) synthesis, i.e. the transfer of choline phosphate from CDP-choline to the free hydroxyl of a diacylglycerol (DAG), producing a PC. It thereby plays a central role in the formation and maintenance of vesicular membranes. The sequence is that of Cholinephosphotransferase 1 from Rattus norvegicus (Rat).